The chain runs to 325 residues: Gamma-hemolysin component B (325 aa).

The N-terminal stretch at 1 to 26 (MKMNKLVKSSVATSMALLLLSGTANA) is a signal peptide.

This sequence belongs to the aerolysin family. Toxicity requires sequential binding and synergistic association of a class S and a class F component which form heterooligomeric complexes. HlgB (class F) associates with either hlgA thus forming an AB toxin or with hlgC thus forming a CB toxin. Interacts with host AMFR.

The protein localises to the secreted. In terms of biological role, toxin that seems to act by forming pores in the membrane of the cell. Has a hemolytic and a leucotoxic activity. Promotes host AMFR-mediated inflammation by mediating 'Lys-27'-linked ubiquitination of TAB3, TAK1-TAB3 complex formation and phosphorylation of TAK1/MAP3K7. In turn, activates host NF-kappa-B signaling pathway. The sequence is that of Gamma-hemolysin component B (hlgB) from Staphylococcus aureus (strain NCTC 8325 / PS 47).